Reading from the N-terminus, the 231-residue chain is Aminodeoxyfutalosine nucleosidase (231 aa).

E14 functions as the Proton acceptor in the catalytic mechanism. Residues G81, V155, and 175–176 (ME) each bind substrate. The Proton donor role is filled by D199.

It belongs to the PNP/UDP phosphorylase family. In terms of assembly, homodimer.

It carries out the reaction 6-amino-6-deoxyfutalosine + H2O = dehypoxanthine futalosine + adenine. It catalyses the reaction S-adenosyl-L-homocysteine + H2O = S-(5-deoxy-D-ribos-5-yl)-L-homocysteine + adenine. The catalysed reaction is S-methyl-5'-thioadenosine + H2O = 5-(methylsulfanyl)-D-ribose + adenine. The enzyme catalyses 5'-deoxyadenosine + H2O = 5-deoxy-D-ribose + adenine. The protein operates within quinol/quinone metabolism; menaquinone biosynthesis. It participates in amino-acid biosynthesis; L-methionine biosynthesis via salvage pathway; S-methyl-5-thio-alpha-D-ribose 1-phosphate from S-methyl-5'-thioadenosine (hydrolase route): step 1/2. Functionally, catalyzes the direct conversion of aminodeoxyfutalosine (AFL) into dehypoxanthine futalosine (DHFL) and adenine via the hydrolysis of the N-glycosidic bond; this reaction seems to represent an essential step in the menaquinone biosynthesis pathway in Helicobacter species. Can also probably catalyzes the hydrolysis of 5'-methylthioadenosine (MTA) and S-adenosylhomocysteine (SAH) to adenine and the corresponding thioribose, 5'-methylthioribose and S-ribosylhomocysteine, respectively. These other activities highlight the tremendous versatility of the enzyme, which also plays key roles in S-adenosylmethionine recycling and in the biosynthesis of the quorum-sensing molecule autoinducer-2. Does not act on futalosine (FL) as substrate. The protein is Aminodeoxyfutalosine nucleosidase (mtnN) of Helicobacter pylori (strain ATCC 700392 / 26695) (Campylobacter pylori).